The primary structure comprises 1316 residues: DNA-directed RNA polymerase subunit beta' (1316 aa).

Zn(2+) is bound by residues Cys-60, Cys-62, Cys-75, and Cys-78. Mg(2+)-binding residues include Asp-535, Asp-537, and Asp-539. Cys-891, Cys-968, Cys-975, and Cys-978 together coordinate Zn(2+).

Belongs to the RNA polymerase beta' chain family. The RNAP catalytic core consists of 2 alpha, 1 beta, 1 beta' and 1 omega subunit. When a sigma factor is associated with the core the holoenzyme is formed, which can initiate transcription. It depends on Mg(2+) as a cofactor. Requires Zn(2+) as cofactor.

The catalysed reaction is RNA(n) + a ribonucleoside 5'-triphosphate = RNA(n+1) + diphosphate. Its function is as follows. DNA-dependent RNA polymerase catalyzes the transcription of DNA into RNA using the four ribonucleoside triphosphates as substrates. The sequence is that of DNA-directed RNA polymerase subunit beta' from Mycobacterium avium (strain 104).